A 232-amino-acid chain; its full sequence is Ubiquinone biosynthesis O-methyltransferase (232 aa).

S-adenosyl-L-methionine-binding residues include Arg36, Gly55, Asp76, and Met120.

Belongs to the methyltransferase superfamily. UbiG/COQ3 family.

It catalyses the reaction a 3-demethylubiquinol + S-adenosyl-L-methionine = a ubiquinol + S-adenosyl-L-homocysteine + H(+). It carries out the reaction a 3-(all-trans-polyprenyl)benzene-1,2-diol + S-adenosyl-L-methionine = a 2-methoxy-6-(all-trans-polyprenyl)phenol + S-adenosyl-L-homocysteine + H(+). It functions in the pathway cofactor biosynthesis; ubiquinone biosynthesis. Functionally, O-methyltransferase that catalyzes the 2 O-methylation steps in the ubiquinone biosynthetic pathway. The protein is Ubiquinone biosynthesis O-methyltransferase of Thiobacillus denitrificans (strain ATCC 25259 / T1).